The chain runs to 399 residues: Chorismate synthase (399 aa).

2 residues coordinate NADP(+): Arg40 and Arg46. Residues 134 to 136, 255 to 256, Gly299, 314 to 318, and Arg340 contribute to the FMN site; these read RAS, QA, and KPIST.

The protein belongs to the chorismate synthase family. In terms of assembly, homotetramer. It depends on FMNH2 as a cofactor.

The catalysed reaction is 5-O-(1-carboxyvinyl)-3-phosphoshikimate = chorismate + phosphate. The protein operates within metabolic intermediate biosynthesis; chorismate biosynthesis; chorismate from D-erythrose 4-phosphate and phosphoenolpyruvate: step 7/7. In terms of biological role, catalyzes the anti-1,4-elimination of the C-3 phosphate and the C-6 proR hydrogen from 5-enolpyruvylshikimate-3-phosphate (EPSP) to yield chorismate, which is the branch point compound that serves as the starting substrate for the three terminal pathways of aromatic amino acid biosynthesis. This reaction introduces a second double bond into the aromatic ring system. This chain is Chorismate synthase, found in Mycolicibacterium smegmatis (strain ATCC 700084 / mc(2)155) (Mycobacterium smegmatis).